The primary structure comprises 163 residues: Small ribosomal subunit protein bS18c (163 aa).

Disordered stretches follow at residues 1 to 52 and 144 to 163; these read MYIS…IGPG and NLRN…SSDC. Basic residues predominate over residues 7 to 48; sequence PFRKSKQPFRKSKQTFHKSKQPFRKFKQPFRKSKQPFRRRSR.

The protein belongs to the bacterial ribosomal protein bS18 family. Part of the 30S ribosomal subunit.

Its subcellular location is the plastid. The protein resides in the chloroplast. The sequence is that of Small ribosomal subunit protein bS18c from Sorghum bicolor (Sorghum).